Reading from the N-terminus, the 350-residue chain is dTDP-D-glucose 4,6-dehydratase (350 aa).

Position 142 (T142) interacts with substrate. D143 serves as the catalytic Proton donor. Catalysis depends on proton acceptor residues E144 and Y166.

It belongs to the NAD(P)-dependent epimerase/dehydratase family. dTDP-glucose dehydratase subfamily. NAD(+) serves as cofactor.

The catalysed reaction is dTDP-alpha-D-glucose = dTDP-4-dehydro-6-deoxy-alpha-D-glucose + H2O. The chain is dTDP-D-glucose 4,6-dehydratase (TGDS) from Homo sapiens (Human).